The chain runs to 81 residues: ATP synthase subunit c (81 aa).

The next 2 helical transmembrane spans lie at 6–26 and 57–77; these read AAAS…GPGI and LAFM…LLFA.

The protein belongs to the ATPase C chain family. F-type ATPases have 2 components, F(1) - the catalytic core - and F(0) - the membrane proton channel. F(1) has five subunits: alpha(3), beta(3), gamma(1), delta(1), epsilon(1). F(0) has four main subunits: a(1), b(1), b'(1) and c(10-14). The alpha and beta chains form an alternating ring which encloses part of the gamma chain. F(1) is attached to F(0) by a central stalk formed by the gamma and epsilon chains, while a peripheral stalk is formed by the delta, b and b' chains.

The protein resides in the cellular thylakoid membrane. Functionally, f(1)F(0) ATP synthase produces ATP from ADP in the presence of a proton or sodium gradient. F-type ATPases consist of two structural domains, F(1) containing the extramembraneous catalytic core and F(0) containing the membrane proton channel, linked together by a central stalk and a peripheral stalk. During catalysis, ATP synthesis in the catalytic domain of F(1) is coupled via a rotary mechanism of the central stalk subunits to proton translocation. Its function is as follows. Key component of the F(0) channel; it plays a direct role in translocation across the membrane. A homomeric c-ring of between 10-14 subunits forms the central stalk rotor element with the F(1) delta and epsilon subunits. In Synechocystis sp. (strain ATCC 27184 / PCC 6803 / Kazusa), this protein is ATP synthase subunit c.